Reading from the N-terminus, the 398-residue chain is 4-hydroxy-3-methylbut-2-enyl diphosphate reductase (398 aa).

A [4Fe-4S] cluster-binding site is contributed by C66. H96 is a (2E)-4-hydroxy-3-methylbut-2-enyl diphosphate binding site. Residue H96 coordinates dimethylallyl diphosphate. Position 96 (H96) interacts with isopentenyl diphosphate. C157 contributes to the [4Fe-4S] cluster binding site. H185 contacts (2E)-4-hydroxy-3-methylbut-2-enyl diphosphate. Residue H185 participates in dimethylallyl diphosphate binding. H185 is an isopentenyl diphosphate binding site. The active-site Proton donor is E187. T250 provides a ligand contact to (2E)-4-hydroxy-3-methylbut-2-enyl diphosphate. C288 provides a ligand contact to [4Fe-4S] cluster. (2E)-4-hydroxy-3-methylbut-2-enyl diphosphate-binding residues include S317, S318, N319, and S380. Positions 317, 318, 319, and 380 each coordinate dimethylallyl diphosphate. 4 residues coordinate isopentenyl diphosphate: S317, S318, N319, and S380.

Belongs to the IspH family. [4Fe-4S] cluster serves as cofactor.

The catalysed reaction is isopentenyl diphosphate + 2 oxidized [2Fe-2S]-[ferredoxin] + H2O = (2E)-4-hydroxy-3-methylbut-2-enyl diphosphate + 2 reduced [2Fe-2S]-[ferredoxin] + 2 H(+). It catalyses the reaction dimethylallyl diphosphate + 2 oxidized [2Fe-2S]-[ferredoxin] + H2O = (2E)-4-hydroxy-3-methylbut-2-enyl diphosphate + 2 reduced [2Fe-2S]-[ferredoxin] + 2 H(+). It functions in the pathway isoprenoid biosynthesis; dimethylallyl diphosphate biosynthesis; dimethylallyl diphosphate from (2E)-4-hydroxy-3-methylbutenyl diphosphate: step 1/1. The protein operates within isoprenoid biosynthesis; isopentenyl diphosphate biosynthesis via DXP pathway; isopentenyl diphosphate from 1-deoxy-D-xylulose 5-phosphate: step 6/6. Catalyzes the conversion of 1-hydroxy-2-methyl-2-(E)-butenyl 4-diphosphate (HMBPP) into a mixture of isopentenyl diphosphate (IPP) and dimethylallyl diphosphate (DMAPP). Acts in the terminal step of the DOXP/MEP pathway for isoprenoid precursor biosynthesis. This Prochlorococcus marinus (strain MIT 9301) protein is 4-hydroxy-3-methylbut-2-enyl diphosphate reductase.